We begin with the raw amino-acid sequence, 468 residues long: Shaggy-related protein kinase theta (468 aa).

Disordered stretches follow at residues 1-53 (MNVM…DQST) and 91-112 (HANRGEEDKDMEPPIVNGCGTE). One can recognise a Protein kinase domain in the interval 134-418 (YMAQRVVGTG…ALEACAHPFF (285 aa)). Residues 140–148 (VGTGSFGVV) and Lys-163 each bind ATP. The Proton acceptor role is filled by Asp-259. Tyr-294 bears the Phosphotyrosine mark.

The protein belongs to the protein kinase superfamily. CMGC Ser/Thr protein kinase family. GSK-3 subfamily. Autophosphorylated mainly on threonine and serine residues. As to expression, in developing pollen.

It carries out the reaction L-seryl-[protein] + ATP = O-phospho-L-seryl-[protein] + ADP + H(+). It catalyses the reaction L-threonyl-[protein] + ATP = O-phospho-L-threonyl-[protein] + ADP + H(+). Functionally, may mediate extracellular signals to regulate transcription in differentiating cells. This Brassica napus (Rape) protein is Shaggy-related protein kinase theta.